We begin with the raw amino-acid sequence, 623 residues long: NADPH-dependent diflavin oxidoreductase 1 (623 aa).

In terms of domain architecture, Flavodoxin-like spans 8 to 153 (LLVLYASQTG…TLDPWMLSLW (146 aa)). FMN-binding positions include 14–19 (SQTGNA), 62–65 (STTG), and Asp-135. The region spanning 221–467 (KPDCFLKMTR…SLPAPSQSLP (247 aa)) is the FAD-binding FR-type domain. FAD is bound by residues Arg-369, 399–402 (RAFS), and 433–436 (GLCS). NADP(+)-binding positions include Thr-475, 541–542 (SR), 547–551 (KVYVQ), and Asp-583. Trp-622 is an FAD binding site.

The protein belongs to the NADPH-dependent diflavin oxidoreductase NDOR1 family. It in the N-terminal section; belongs to the flavodoxin family. This sequence in the C-terminal section; belongs to the flavoprotein pyridine nucleotide cytochrome reductase family. As to quaternary structure, interacts with At5g18400. FAD serves as cofactor. It depends on FMN as a cofactor. As to expression, widely expressed.

The protein resides in the cytoplasm. Its subcellular location is the nucleus. It carries out the reaction 2 oxidized [2Fe-2S]-[protein] + NADPH = 2 reduced [2Fe-2S]-[protein] + NADP(+) + H(+). NADPH-dependent reductase which is a central component of the cytosolic iron-sulfur (Fe-S) protein assembly (CIA) machinery. Transfers electrons from NADPH via its FAD and FMN prosthetic groups to the [2Fe-2S] cluster of the anamorsin/DRE2 homolog, another key component of the CIA machinery. In turn, this reduced cluster provides electrons for assembly of cytosolic iron-sulfur cluster proteins. Catalyzes the NADP-dependent reduction of cytochrome c, but not cytochrome P450 in vitro. Required for embryo development. The polypeptide is NADPH-dependent diflavin oxidoreductase 1 (ATR3) (Arabidopsis thaliana (Mouse-ear cress)).